The following is a 40-amino-acid chain: RapK inhibitor (40 aa).

2 consecutive propeptides follow at residues 1–34 (MKKL…IQVA) and Gly40.

Belongs to the Phr family. In terms of processing, contains a predicted signal peptide cleavage site in the N-terminal region, however the propeptide is probably only subject to processing events at the ends of the mature peptide.

The protein localises to the secreted. Its subcellular location is the cytoplasm. Functionally, signaling molecule involved in the regulation of genetic competence development. Secreted during production, but the mature peptide acts intracellularly, indicating that it needs to be imported into the cell to function. Stimulates expression of the genes controlled by ComA, a transcriptional factor that regulates the development of genetic competence. Acts by inhibiting RapK, which regulates the activity of ComA. In Bacillus subtilis (strain 168), this protein is RapK inhibitor (phrK).